The sequence spans 136 residues: Probable 5-hydroxyisourate hydrolase ZK697.8 (136 aa).

A signal peptide spans 1-19 (MIKFLLFLAIAAATVISNA). Residues His31, Arg69, and Tyr133 each contribute to the substrate site.

Belongs to the transthyretin family. 5-hydroxyisourate hydrolase subfamily. In terms of assembly, homotetramer.

The enzyme catalyses 5-hydroxyisourate + H2O = 5-hydroxy-2-oxo-4-ureido-2,5-dihydro-1H-imidazole-5-carboxylate + H(+). Its function is as follows. Catalyzes the hydrolysis of 5-hydroxyisourate (HIU) to 2-oxo-4-hydroxy-4-carboxy-5-ureidoimidazoline (OHCU). This is Probable 5-hydroxyisourate hydrolase ZK697.8 from Caenorhabditis elegans.